Consider the following 161-residue polypeptide: Nucleotide-binding protein NE2248 (161 aa).

The protein belongs to the YajQ family.

Nucleotide-binding protein. The sequence is that of Nucleotide-binding protein NE2248 from Nitrosomonas europaea (strain ATCC 19718 / CIP 103999 / KCTC 2705 / NBRC 14298).